We begin with the raw amino-acid sequence, 396 residues long: Formate-dependent phosphoribosylglycinamide formyltransferase (396 aa).

Residues 25-26 and Glu85 contribute to the N(1)-(5-phospho-beta-D-ribosyl)glycinamide site; that span reads EL. ATP contacts are provided by residues Arg117, Lys158, 163–168, 198–201, and Glu206; these read SSGKGQ and EAFI. Residues 122–311 enclose the ATP-grasp domain; it reads RLAAETLAIP…EFALHVRAIL (190 aa). Glu270 and Glu282 together coordinate Mg(2+). N(1)-(5-phospho-beta-D-ribosyl)glycinamide-binding positions include Asp289, Lys359, and 366 to 367; that span reads RR.

Belongs to the PurK/PurT family. Homodimer.

It catalyses the reaction N(1)-(5-phospho-beta-D-ribosyl)glycinamide + formate + ATP = N(2)-formyl-N(1)-(5-phospho-beta-D-ribosyl)glycinamide + ADP + phosphate + H(+). It functions in the pathway purine metabolism; IMP biosynthesis via de novo pathway; N(2)-formyl-N(1)-(5-phospho-D-ribosyl)glycinamide from N(1)-(5-phospho-D-ribosyl)glycinamide (formate route): step 1/1. In terms of biological role, involved in the de novo purine biosynthesis. Catalyzes the transfer of formate to 5-phospho-ribosyl-glycinamide (GAR), producing 5-phospho-ribosyl-N-formylglycinamide (FGAR). Formate is provided by PurU via hydrolysis of 10-formyl-tetrahydrofolate. The sequence is that of Formate-dependent phosphoribosylglycinamide formyltransferase from Shewanella frigidimarina (strain NCIMB 400).